Consider the following 157-residue polypeptide: uncharacterized protein (157 aa).

Residues 9–146 (LLINYKTLDE…GDFYVWHPET (138 aa)) enclose the N-acetyltransferase domain.

This is an uncharacterized protein from Bacillus cereus (strain ATCC 10987 / NRS 248).